A 242-amino-acid chain; its full sequence is MTDRNFSPQQGQGPQESLPEGPQPSTMIQREEMNMPRQYSEQQQLQENEGEGENTRLPVSEEEFRMVQELQAIQAGHDQANLPPSGRGSLEGEDNGNSDGADGEMDEDDEEYDVFRNVGQGLVGHYKEIMIRYWQELINEIESTNEPGSEHQDDFKSHSLPFARIRKVMKTDEDVKMISAEAPIIFAKACEIFITELTMRAWCVAERNKRRTLQKADIAEALQKSDMFDFLIDVVPRRPLPQ.

Residues 1 to 15 (MTDRNFSPQQGQGPQ) are compositionally biased toward polar residues. The interval 1–108 (MTDRNFSPQQ…DGADGEMDED (108 aa)) is disordered. Ser7 is subject to Phosphoserine. The span at 91 to 108 (EGEDNGNSDGADGEMDED) shows a compositional bias: acidic residues.

It belongs to the NFYC/HAP5 subunit family. In terms of assembly, component of the CCAT-binding factor (CBF or HAP complex II), which consists of one copy each of HAP2, HAP3, HAP4 and HAP5. The assembly of the HAP2-HAP3-HAP5 heteromer (HAP complex I) occurs in a one-step pathway and its binding to DNA is a prerequisite for the association of HAP4.

It localises to the nucleus. Acts a component of the CCAT-binding factor, which is a transcriptional activator and binds to the upstream activation site (UAS2) of the CYC1 gene and other genes involved in mitochondrial electron transport and activates their expression. Recognizes the sequence 5'-CCAAT-3'. HAP5 is essential for DNA-binding activity. It may be the linchpin that binds to the subunit association domains (SAD) of HAP2 and HAP3 to bring these proteins together. The chain is Transcriptional activator HAP5 (HAP5) from Saccharomyces cerevisiae (strain ATCC 204508 / S288c) (Baker's yeast).